Consider the following 439-residue polypeptide: Serine hydroxymethyltransferase (439 aa).

127–129 (AHV) is a binding site for (6S)-5,6,7,8-tetrahydrofolate. Lys233 bears the N6-(pyridoxal phosphate)lysine mark.

It belongs to the SHMT family. As to quaternary structure, homodimer. It depends on pyridoxal 5'-phosphate as a cofactor.

The protein resides in the cytoplasm. Its pathway is amino-acid biosynthesis; glycine biosynthesis; glycine from L-serine: step 1/1. Catalyzes the reversible interconversion of serine and glycine with a modified folate serving as the one-carbon carrier. Also exhibits a pteridine-independent aldolase activity toward beta-hydroxyamino acids, producing glycine and aldehydes, via a retro-aldol mechanism. The protein is Serine hydroxymethyltransferase of Aeropyrum pernix (strain ATCC 700893 / DSM 11879 / JCM 9820 / NBRC 100138 / K1).